Reading from the N-terminus, the 279-residue chain is Thymidylate synthase (279 aa).

132-133 (RR) contributes to the dUMP binding site. The Nucleophile role is filled by C153. Residues 178 to 181 (RSND), N189, and 219 to 221 (HIY) contribute to the dUMP site. D181 contacts (6R)-5,10-methylene-5,6,7,8-tetrahydrofolate. A278 is a binding site for (6R)-5,10-methylene-5,6,7,8-tetrahydrofolate.

It belongs to the thymidylate synthase family. Bacterial-type ThyA subfamily. Homodimer.

Its subcellular location is the cytoplasm. It catalyses the reaction dUMP + (6R)-5,10-methylene-5,6,7,8-tetrahydrofolate = 7,8-dihydrofolate + dTMP. It functions in the pathway pyrimidine metabolism; dTTP biosynthesis. In terms of biological role, catalyzes the reductive methylation of 2'-deoxyuridine-5'-monophosphate (dUMP) to 2'-deoxythymidine-5'-monophosphate (dTMP) while utilizing 5,10-methylenetetrahydrofolate (mTHF) as the methyl donor and reductant in the reaction, yielding dihydrofolate (DHF) as a by-product. This enzymatic reaction provides an intracellular de novo source of dTMP, an essential precursor for DNA biosynthesis. The polypeptide is Thymidylate synthase (Lactococcus lactis subsp. cremoris (strain SK11)).